Here is a 492-residue protein sequence, read N- to C-terminus: MO25-like protein 3 (492 aa).

Positions serine 442 to arginine 492 are disordered. Over residues proline 465–serine 474 the composition is skewed to pro residues.

The protein belongs to the Mo25 family.

The protein is MO25-like protein 3 of Caenorhabditis briggsae.